Consider the following 118-residue polypeptide: Large ribosomal subunit protein uL18 (118 aa).

This sequence belongs to the universal ribosomal protein uL18 family. Part of the 50S ribosomal subunit; part of the 5S rRNA/L5/L18/L25 subcomplex. Contacts the 5S and 23S rRNAs.

In terms of biological role, this is one of the proteins that bind and probably mediate the attachment of the 5S RNA into the large ribosomal subunit, where it forms part of the central protuberance. The sequence is that of Large ribosomal subunit protein uL18 from Campylobacter jejuni subsp. doylei (strain ATCC BAA-1458 / RM4099 / 269.97).